The sequence spans 232 residues: Sugar fermentation stimulation protein homolog (232 aa).

Belongs to the SfsA family.

The polypeptide is Sugar fermentation stimulation protein homolog (Pyrobaculum arsenaticum (strain DSM 13514 / JCM 11321 / PZ6)).